Reading from the N-terminus, the 874-residue chain is Probable inorganic carbon transporter subunit DabA (874 aa).

Cys398, Asp400, His580, and Cys595 together coordinate Zn(2+).

It belongs to the inorganic carbon transporter (TC 9.A.2) DabA family. In terms of assembly, forms a complex with DabB. Zn(2+) serves as cofactor.

The protein localises to the cell membrane. Functionally, part of an energy-coupled inorganic carbon pump. The polypeptide is Probable inorganic carbon transporter subunit DabA (Bacillus cereus (strain Q1)).